The primary structure comprises 98 residues: NADH-ubiquinone oxidoreductase chain 4L (98 aa).

The next 3 helical transmembrane spans lie at 1–21, 29–49, and 61–81; these read MSLV…GLLM, ALLC…LTIL, and IILL…LVTI.

This sequence belongs to the complex I subunit 4L family. In terms of assembly, core subunit of respiratory chain NADH dehydrogenase (Complex I) which is composed of 45 different subunits.

The protein localises to the mitochondrion inner membrane. The enzyme catalyses a ubiquinone + NADH + 5 H(+)(in) = a ubiquinol + NAD(+) + 4 H(+)(out). Core subunit of the mitochondrial membrane respiratory chain NADH dehydrogenase (Complex I) which catalyzes electron transfer from NADH through the respiratory chain, using ubiquinone as an electron acceptor. Part of the enzyme membrane arm which is embedded in the lipid bilayer and involved in proton translocation. The sequence is that of NADH-ubiquinone oxidoreductase chain 4L (MT-ND4L) from Ziphius cavirostris (Cuvier's beaked whale).